The chain runs to 466 residues: Probable WRKY transcription factor 32 (466 aa).

Disordered regions lie at residues 1–45 (MEED…MEDL) and 140–166 (SVPT…PRTP). The span at 8-38 (DEAKTYTVEKSEKVEPEKDGLSQFRDEEKSL) shows a compositional bias: basic and acidic residues. A DNA-binding region (WRKY 1) is located at residues 162-226 (VPRTPARDGY…NKGLHTHEPP (65 aa)). The Zn(2+) site is built by cysteine 193, cysteine 198, histidine 221, and histidine 223. Positions 284–317 (HCENEAVEEPEPKRRLKKDNSQSSDSVSKPGKKN) are disordered. The segment at residues 325 to 390 (GDVGICGDGY…YKGVHNHDMP (66 aa)) is a DNA-binding region (WRKY 2). Residues cysteine 356, cysteine 361, histidine 385, and histidine 387 each coordinate Zn(2+). The interval 410-439 (TSMRTRTDDQVNIPTSSQCSVGRESEKQSK) is disordered. The span at 419-429 (QVNIPTSSQCS) shows a compositional bias: polar residues.

This sequence belongs to the WRKY group I family.

The protein resides in the nucleus. Functionally, transcription factor. Interacts specifically with the W box (5'-(T)TGAC[CT]-3'), a frequently occurring elicitor-responsive cis-acting element. The sequence is that of Probable WRKY transcription factor 32 (WRKY32) from Arabidopsis thaliana (Mouse-ear cress).